The chain runs to 456 residues: MTKKALSAVILAAGKGTRMYSDLPKVLHTIAGKPMVKHVIDIAHQLGSENIHLIYGHGGDLMRTHLANEQVNWVLQTEQLGTAHAVQQAAPFFKDNENIVVLYGDAPLITKETLEKLIEAKPENGIALLTVNLDNPTGYGRIIRENGNVVAIVEQKDANAEQLNIKEVNTGVMVSDGASFKKWLARVGNNNAQGEYYLTDLIALANQDNCQVVAVQATDVMEVEGANNRLQLAALERYFQNKQASKLLLEGVMIYDPARFDLRGTLEHGKDVEIDVNVIIEGNVKLGDCVKIGAGCVLKNVVIGNDVEIKPYSVLEDSIVGEKAAIGPFSRLRPGAELAAETHVGNFVEIKKSTVGKGSKVNHLTYVGDSEIGSNCNIGAGVITCNYDGANKFKTIIGDDVFVGSDTQLVAPVKVANGATIGAGTTITRDVGENELVITRVAQRHIQGWQRPIKKK.

Residues 1–229 (MTKKALSAVI…VMEVEGANNR (229 aa)) are pyrophosphorylase. UDP-N-acetyl-alpha-D-glucosamine contacts are provided by residues 11-14 (LAAG), K25, Q76, 81-82 (GT), 103-105 (YGD), G140, E154, N169, and N227. D105 provides a ligand contact to Mg(2+). Mg(2+) is bound at residue N227. Residues 230–250 (LQLAALERYFQNKQASKLLLE) form a linker region. Residues 251–456 (GVMIYDPARF…QGWQRPIKKK (206 aa)) form an N-acetyltransferase region. R333 and K351 together coordinate UDP-N-acetyl-alpha-D-glucosamine. H363 serves as the catalytic Proton acceptor. UDP-N-acetyl-alpha-D-glucosamine contacts are provided by Y366 and N377. Acetyl-CoA-binding positions include A380, 386–387 (NY), S405, A423, and R440.

In the N-terminal section; belongs to the N-acetylglucosamine-1-phosphate uridyltransferase family. The protein in the C-terminal section; belongs to the transferase hexapeptide repeat family. In terms of assembly, homotrimer. Requires Mg(2+) as cofactor.

The protein localises to the cytoplasm. The enzyme catalyses alpha-D-glucosamine 1-phosphate + acetyl-CoA = N-acetyl-alpha-D-glucosamine 1-phosphate + CoA + H(+). It catalyses the reaction N-acetyl-alpha-D-glucosamine 1-phosphate + UTP + H(+) = UDP-N-acetyl-alpha-D-glucosamine + diphosphate. The protein operates within nucleotide-sugar biosynthesis; UDP-N-acetyl-alpha-D-glucosamine biosynthesis; N-acetyl-alpha-D-glucosamine 1-phosphate from alpha-D-glucosamine 6-phosphate (route II): step 2/2. Its pathway is nucleotide-sugar biosynthesis; UDP-N-acetyl-alpha-D-glucosamine biosynthesis; UDP-N-acetyl-alpha-D-glucosamine from N-acetyl-alpha-D-glucosamine 1-phosphate: step 1/1. It functions in the pathway bacterial outer membrane biogenesis; LPS lipid A biosynthesis. Its function is as follows. Catalyzes the last two sequential reactions in the de novo biosynthetic pathway for UDP-N-acetylglucosamine (UDP-GlcNAc). The C-terminal domain catalyzes the transfer of acetyl group from acetyl coenzyme A to glucosamine-1-phosphate (GlcN-1-P) to produce N-acetylglucosamine-1-phosphate (GlcNAc-1-P), which is converted into UDP-GlcNAc by the transfer of uridine 5-monophosphate (from uridine 5-triphosphate), a reaction catalyzed by the N-terminal domain. The chain is Bifunctional protein GlmU from Haemophilus influenzae (strain 86-028NP).